The primary structure comprises 104 residues: Large ribosomal subunit protein uL24 (104 aa).

Belongs to the universal ribosomal protein uL24 family. In terms of assembly, part of the 50S ribosomal subunit.

One of two assembly initiator proteins, it binds directly to the 5'-end of the 23S rRNA, where it nucleates assembly of the 50S subunit. Functionally, one of the proteins that surrounds the polypeptide exit tunnel on the outside of the subunit. This Pseudomonas fluorescens (strain ATCC BAA-477 / NRRL B-23932 / Pf-5) protein is Large ribosomal subunit protein uL24.